A 224-amino-acid chain; its full sequence is Thiamine-triphosphatase (224 aa).

Alanine 2 carries the post-translational modification N-acetylalanine. Residues leucine 5–phenylalanine 201 enclose the CYTH domain. Mg(2+)-binding residues include glutamate 7 and glutamate 9. 5 residues coordinate substrate: lysine 11, arginine 55, arginine 57, lysine 65, and arginine 125. Positions 145, 157, and 159 each coordinate Mg(2+). Glutamate 157 provides a ligand contact to substrate. Lysine 193 is a binding site for substrate.

Belongs to the ThTPase family. As to quaternary structure, monomer. Requires Mg(2+) as cofactor.

Its subcellular location is the cytoplasm. The enzyme catalyses thiamine triphosphate + H2O = thiamine diphosphate + phosphate + H(+). Hydrolase highly specific for thiamine triphosphate (ThTP). The protein is Thiamine-triphosphatase (Thtpa) of Rattus norvegicus (Rat).